The following is a 403-amino-acid chain: 4-hydroxyphenylpyruvate dioxygenase (403 aa).

2 consecutive VOC domains span residues 25-169 and 201-359; these read GYDH…LVER and RIDH…LFTK. Fe cation contacts are provided by histidine 204, histidine 287, and glutamate 370.

This sequence belongs to the 4HPPD family. As to quaternary structure, homodimer. It depends on Fe cation as a cofactor.

The enzyme catalyses 3-(4-hydroxyphenyl)pyruvate + O2 = homogentisate + CO2. Its pathway is amino-acid degradation; L-phenylalanine degradation; acetoacetate and fumarate from L-phenylalanine: step 3/6. Its function is as follows. 4-hydroxyphenylpyruvate dioxygenase; part of the L-tyrosine degradation gene cluster that mediates the biosynthesis of the brownish pigment pyomelanin as an alternative melanin. The 4-hydroxyphenylpyruvate dioxygenase hppD catalyzes the conversion of 4-hydroxyphenylpyruvate to homogentisic acid (HGA). The protein hmgX is crucial for this conversion and thus, probably functions as an accessory factor to mediate specific activity of hppD. The homogentisate 1,2-dioxygenase hmgA is then involved in the cleavage of the aromatic ring of HGA and its conversion to 4-maleylacetoacetate. When hmgA activity is lowered by the cell wall integrity (CWI) signaling pathway, HGA accumulates and leads to the production of pyomelanin through benzoquinone acetic acid after oxidation and polymerization. On the opposite, in non-stress conditions, both hppD and hmgA activities are balanced and HGA is degraded into 4-maleylacetoacetate. 4-maleylacetoacetate is further converted to 4-fumarylacetoacetate by the maleylacetoacetate isomerase maiA, which is degraded into fumarate and acetoacetate by the fumarylacetoacetase fahA. This Aspergillus fumigatus (strain ATCC MYA-4609 / CBS 101355 / FGSC A1100 / Af293) (Neosartorya fumigata) protein is 4-hydroxyphenylpyruvate dioxygenase.